Reading from the N-terminus, the 194-residue chain is FMN-dependent NADH:quinone oxidoreductase (194 aa).

Residues S10 and 90–93 (MYNL) each bind FMN.

Belongs to the azoreductase type 1 family. As to quaternary structure, homodimer. The cofactor is FMN.

The enzyme catalyses 2 a quinone + NADH + H(+) = 2 a 1,4-benzosemiquinone + NAD(+). It carries out the reaction N,N-dimethyl-1,4-phenylenediamine + anthranilate + 2 NAD(+) = 2-(4-dimethylaminophenyl)diazenylbenzoate + 2 NADH + 2 H(+). Functionally, quinone reductase that provides resistance to thiol-specific stress caused by electrophilic quinones. Its function is as follows. Also exhibits azoreductase activity. Catalyzes the reductive cleavage of the azo bond in aromatic azo compounds to the corresponding amines. The sequence is that of FMN-dependent NADH:quinone oxidoreductase from Haemophilus influenzae (strain 86-028NP).